We begin with the raw amino-acid sequence, 177 residues long: MSRVAKNPVKLPSGVEVKLVGQQLSVKGAKGTLELIIHSSVEIVEEAGELRFAARNGDQQTRAMAGTTRALVNNMVQGVSQGFERKLQLVGVGYKAQAKGTVLNLALGFSHPVDYELPNGITAETPSQTDILIRGIDKQLVGQVAAEIRDFRRPEPYKGKGVRYADEVVRRKEAKKK.

This sequence belongs to the universal ribosomal protein uL6 family. Part of the 50S ribosomal subunit.

This protein binds to the 23S rRNA, and is important in its secondary structure. It is located near the subunit interface in the base of the L7/L12 stalk, and near the tRNA binding site of the peptidyltransferase center. The protein is Large ribosomal subunit protein uL6 of Pseudomonas syringae pv. tomato (strain ATCC BAA-871 / DC3000).